Here is a 259-residue protein sequence, read N- to C-terminus: Isoprenyl transferase (259 aa).

D33 is an active-site residue. D33 contributes to the Mg(2+) binding site. Substrate-binding positions include 34-37 (GNRR), W38, H51, and 79-81 (STE). The active-site Proton acceptor is N82. Substrate is bound by residues R86, R208, and 214-216 (RMS). E227 lines the Mg(2+) pocket.

The protein belongs to the UPP synthase family. As to quaternary structure, homodimer. It depends on Mg(2+) as a cofactor.

Catalyzes the condensation of isopentenyl diphosphate (IPP) with allylic pyrophosphates generating different type of terpenoids. This Streptomyces fradiae (Streptomyces roseoflavus) protein is Isoprenyl transferase.